The following is a 601-amino-acid chain: DDB1- and CUL4-associated factor 8 (601 aa).

Polar residues-rich tracts occupy residues Met-1 to Glu-24 and Val-46 to Ala-60. The segment at Met-1 to Leu-150 is disordered. A Nuclear export signal motif is present at residues Ile-39–Leu-50. The segment covering Glu-61–Ser-99 has biased composition (basic and acidic residues). A coiled-coil region spans residues Asn-94–Glu-131. Residues Glu-100–Glu-113 show a composition bias toward acidic residues. Over residues Arg-116–Ala-126 the composition is skewed to basic residues. The segment covering Asn-127–Asp-140 has biased composition (basic and acidic residues). 7 WD repeats span residues Gly-194–Glu-233, Gly-237–Asn-278, Gln-284–Arg-324, Glu-332–Asn-372, Glu-388–Tyr-427, Arg-435–Phe-475, and Asp-479–Asp-519. The tract at residues Arg-561–Ser-601 is disordered.

This sequence belongs to the WD repeat DCAF8 family.

Its subcellular location is the nucleus. It is found in the cytoplasm. The polypeptide is DDB1- and CUL4-associated factor 8 (dcaf8) (Xenopus laevis (African clawed frog)).